Reading from the N-terminus, the 180-residue chain is Inorganic pyrophosphatase (180 aa).

3 residues coordinate substrate: K28, R42, and Y54. Residues D66, D71, and D102 each contribute to the Mg(2+) site. Y139 contacts substrate.

Belongs to the PPase family. In terms of assembly, homohexamer. The cofactor is Mg(2+).

It is found in the cytoplasm. The catalysed reaction is diphosphate + H2O = 2 phosphate + H(+). Its function is as follows. Hydrolyzes PPi generated in anabolic reactions. In terms of biological role, catalyzes the hydrolysis of inorganic pyrophosphate (PPi) forming two phosphate ions. The chain is Inorganic pyrophosphatase from Pseudanabaena sp. (strain PCC 6903).